We begin with the raw amino-acid sequence, 216 residues long: Redox-sensing transcriptional repressor Rex (216 aa).

Positions 20–59 (QYYRLFKSLVEENVTRTNSQLISEKIGVDAATIRRDFSLF) form a DNA-binding region, H-T-H motif. Position 94–99 (94–99 (GVGNLG)) interacts with NAD(+).

This sequence belongs to the transcriptional regulatory Rex family. Homodimer.

It is found in the cytoplasm. In terms of biological role, modulates transcription in response to changes in cellular NADH/NAD(+) redox state. This chain is Redox-sensing transcriptional repressor Rex, found in Lactococcus lactis subsp. lactis (strain IL1403) (Streptococcus lactis).